The following is a 250-amino-acid chain: MSGHSKWATTKHKKAVIDARRGKSFAKLIKNIEVAARTGGGDPTGNPTLYDAIQKAKKTSVPNDNIERARKRGAGEEAGGADWQTIMYEGYGPNGVAVLIECLTDNRNRAAGEVRTAMTRNGGNLADPGSVSYLFARKGVVTLEKNGQSEDDVLMAVLDAGAEEVTDLGETFEIVSEPQDLVAVRSALQEAGIDYDSAEADFRASVEVPLDVDGARKIFKLVDALEDSDDVQNVYTNIDLSDEVLAALED.

The protein belongs to the TACO1 family.

Its subcellular location is the cytoplasm. This chain is Probable transcriptional regulatory protein RER_29220, found in Rhodococcus erythropolis (strain PR4 / NBRC 100887).